The primary structure comprises 89 residues: Small ribosomal subunit protein uS14B (89 aa).

The segment at 38 to 61 is disordered; it reads KLPKDAHPSRLKLRDQTDGRPRGY. Basic and acidic residues predominate over residues 39–58; the sequence is LPKDAHPSRLKLRDQTDGRP.

The protein belongs to the universal ribosomal protein uS14 family. In terms of assembly, part of the 30S ribosomal subunit. Contacts proteins S3 and S10.

In terms of biological role, binds 16S rRNA, required for the assembly of 30S particles and may also be responsible for determining the conformation of the 16S rRNA at the A site. In Enterococcus faecalis (strain ATCC 700802 / V583), this protein is Small ribosomal subunit protein uS14B.